We begin with the raw amino-acid sequence, 304 residues long: Oxygen-dependent coproporphyrinogen-III oxidase (304 aa).

Residue serine 94 coordinates substrate. A divalent metal cation is bound by residues histidine 98 and histidine 108. Histidine 108 (proton donor) is an active-site residue. 110–112 (NVR) contributes to the substrate binding site. Positions 147 and 177 each coordinate a divalent metal cation. Positions 242 to 277 (YVEFNLVYDRGTLFGLQTGGRTESILMSMPPLVRWE) are important for dimerization. 260–262 (GGR) provides a ligand contact to substrate.

It belongs to the aerobic coproporphyrinogen-III oxidase family. In terms of assembly, homodimer. The cofactor is a divalent metal cation.

The protein localises to the cytoplasm. The catalysed reaction is coproporphyrinogen III + O2 + 2 H(+) = protoporphyrinogen IX + 2 CO2 + 2 H2O. The protein operates within porphyrin-containing compound metabolism; protoporphyrin-IX biosynthesis; protoporphyrinogen-IX from coproporphyrinogen-III (O2 route): step 1/1. Its function is as follows. Involved in the heme biosynthesis. Catalyzes the aerobic oxidative decarboxylation of propionate groups of rings A and B of coproporphyrinogen-III to yield the vinyl groups in protoporphyrinogen-IX. This chain is Oxygen-dependent coproporphyrinogen-III oxidase, found in Shewanella pealeana (strain ATCC 700345 / ANG-SQ1).